The sequence spans 302 residues: Putative S-adenosyl-L-methionine-dependent methyltransferase MAV_2803 (302 aa).

S-adenosyl-L-methionine-binding positions include D129 and 158–159; that span reads DL.

The protein belongs to the UPF0677 family.

Functionally, exhibits S-adenosyl-L-methionine-dependent methyltransferase activity. The polypeptide is Putative S-adenosyl-L-methionine-dependent methyltransferase MAV_2803 (Mycobacterium avium (strain 104)).